A 284-amino-acid polypeptide reads, in one-letter code: NADH-cytochrome b5 reductase 1 (284 aa).

The helical transmembrane segment at 8–28 threads the bilayer; it reads PLFVFSTIAIIISTFVIFYFV. In terms of domain architecture, FAD-binding FR-type spans 41–144; it reads DTFQKFPLIE…RGPKGFFTYT (104 aa). FAD is bound by residues 124–139 and 150–182; these read DSKK…GPKG and SFGM…KISL.

It belongs to the flavoprotein pyridine nucleotide cytochrome reductase family. As to quaternary structure, monomer. Component of the 2-(3-amino-3-carboxypropyl)histidine synthase complex composed of DPH1, DPH2, DPH3 and a NADH-dependent reductase, predominantly CBR1. FAD serves as cofactor.

Its subcellular location is the mitochondrion outer membrane. The catalysed reaction is 2 Fe(III)-[cytochrome b5] + NADH = 2 Fe(II)-[cytochrome b5] + NAD(+) + H(+). It catalyses the reaction 2 Fe(3+)-[Dph3] + NADH = 2 Fe(2+)-[Dph3] + NAD(+) + H(+). The protein operates within protein modification; peptidyl-diphthamide biosynthesis. In terms of biological role, NADH-dependent reductase for DPH3 and cytochrome b5. Required for the first step of diphthamide biosynthesis, a post-translational modification of histidine which occurs in elongation factor 2. DPH1 and DPH2 transfer a 3-amino-3-carboxypropyl (ACP) group from S-adenosyl-L-methionine (SAM) to a histidine residue, the reaction is assisted by a reduction system comprising DPH3 and a NADH-dependent reductase, predominantly CBR1. By reducing DPH3, also involved in the formation of the tRNA wobble base modification mcm5s 2U (5-methoxycarbonylmethyl-2-thiouridine), mediated by the elongator complex. The cytochrome b5/NADH cytochrome b5 reductase electron transfer system supports the catalytic activity of several sterol biosynthetic enzymes. The sequence is that of NADH-cytochrome b5 reductase 1 (CBR1) from Scheffersomyces stipitis (strain ATCC 58785 / CBS 6054 / NBRC 10063 / NRRL Y-11545) (Yeast).